The following is a 143-amino-acid chain: Endoribonuclease YbeY (143 aa).

Zn(2+) contacts are provided by H106, H110, and H116.

The protein belongs to the endoribonuclease YbeY family. Zn(2+) serves as cofactor.

The protein resides in the cytoplasm. Its function is as follows. Single strand-specific metallo-endoribonuclease involved in late-stage 70S ribosome quality control and in maturation of the 3' terminus of the 16S rRNA. This is Endoribonuclease YbeY from Petrotoga mobilis (strain DSM 10674 / SJ95).